A 1528-amino-acid polypeptide reads, in one-letter code: Zinc finger FYVE domain-containing protein 16 (1528 aa).

S120 is subject to Phosphoserine. A disordered region spans residues 629-664; sequence TQAVGGARPKQLLSLPPGTRSSKELNKPDVVDVPES. The segment covering 649–658 has biased composition (basic and acidic residues); it reads SSKELNKPDV. The segment at 735–793 adopts an FYVE-type zinc-finger fold; sequence DSEAPNCMNCQVKFTFTKRRHHCRACGKVFCGVCCNRKCKLQYLEKEARVCVICYETIN. The Zn(2+) site is built by C741, C744, C757, C760, C765, C768, C785, and C788. A phosphoserine mark is found at S803, S833, S884, and S927. The segment at 819 to 849 is disordered; the sequence is TDQPLQETQTSSTPSPTTLPISALKQPNVEG. Over residues 821 to 838 the composition is skewed to low complexity; sequence QPLQETQTSSTPSPTTLP. The tract at residues 928 to 949 is disordered; sequence PTCHTAPVERLPGNTGTEGLPM.

In terms of assembly, interacts (via C-terminus) with TOM1 (via C-terminus); interaction is required to target TOM1 to endosomes. Does not interact with TOM1L1 or TOM1L2.

The protein localises to the cytoplasm. Its subcellular location is the early endosome membrane. In terms of biological role, may be involved in regulating membrane trafficking in the endosomal pathway. Overexpression induces endosome aggregation. Required to target TOM1 to endosomes. The protein is Zinc finger FYVE domain-containing protein 16 (Zfyve16) of Mus musculus (Mouse).